The sequence spans 593 residues: Chromosomal replication initiator protein DnaA (593 aa).

The interval 1–71 (MSDPCWEQCV…EIISNSDAGP (71 aa)) is domain I, interacts with DnaA modulators. Residues 71–256 (PKSLEIAVAQ…DVEGGIQHKH (186 aa)) are domain II. The tract at residues 97 to 186 (AVPVPDPLPS…STESSADRER (90 aa)) is disordered. Polar residues predominate over residues 113-124 (SFQPPKGNTSAD). Residues 257–473 (NLNTTFIFDN…GALKRVIANA (217 aa)) are domain III, AAA+ region. ATP is bound by residues Gly301, Gly303, Lys304, and Thr305. The interval 474-593 (QFTQRSISVE…VKNLLRTLTT (120 aa)) is domain IV, binds dsDNA.

This sequence belongs to the DnaA family. In terms of assembly, oligomerizes as a right-handed, spiral filament on DNA at oriC.

It localises to the cytoplasm. Functionally, plays an essential role in the initiation and regulation of chromosomal replication. ATP-DnaA binds to the origin of replication (oriC) to initiate formation of the DNA replication initiation complex once per cell cycle. Binds the DnaA box (a 9 base pair repeat at the origin) and separates the double-stranded (ds)DNA. Forms a right-handed helical filament on oriC DNA; dsDNA binds to the exterior of the filament while single-stranded (ss)DNA is stabiized in the filament's interior. The ATP-DnaA-oriC complex binds and stabilizes one strand of the AT-rich DNA unwinding element (DUE), permitting loading of DNA polymerase. After initiation quickly degrades to an ADP-DnaA complex that is not apt for DNA replication. Binds acidic phospholipids. The polypeptide is Chromosomal replication initiator protein DnaA (Teredinibacter turnerae (strain ATCC 39867 / T7901)).